The sequence spans 138 residues: Large ribosomal subunit protein uL16 (138 aa).

Basic residues predominate over residues 1-19 (MLIPRRVKHRKQHHPKRSG). The tract at residues 1–24 (MLIPRRVKHRKQHHPKRSGAAKGG) is disordered.

It belongs to the universal ribosomal protein uL16 family. Part of the 50S ribosomal subunit.

In terms of biological role, binds 23S rRNA and is also seen to make contacts with the A and possibly P site tRNAs. The sequence is that of Large ribosomal subunit protein uL16 from Micrococcus luteus (strain ATCC 4698 / DSM 20030 / JCM 1464 / CCM 169 / CCUG 5858 / IAM 1056 / NBRC 3333 / NCIMB 9278 / NCTC 2665 / VKM Ac-2230) (Micrococcus lysodeikticus).